The chain runs to 132 residues: Large-conductance mechanosensitive channel (132 aa).

The next 2 helical transmembrane spans lie at 14–34 (VIDL…VSSL) and 67–87 (GNFI…FMFV).

This sequence belongs to the MscL family. As to quaternary structure, homopentamer.

It is found in the cell membrane. Functionally, channel that opens in response to stretch forces in the membrane lipid bilayer. May participate in the regulation of osmotic pressure changes within the cell. The chain is Large-conductance mechanosensitive channel from Bacillus anthracis (strain A0248).